We begin with the raw amino-acid sequence, 330 residues long: Tryptophan--tRNA ligase (330 aa).

ATP contacts are provided by residues 10–12 and 18–19; these read QPS and GN. A 'HIGH' region motif is present at residues 11-19; sequence PSGSVTLGN. An L-tryptophan-binding site is contributed by Asp133. Residues 145 to 147, Ile184, and 193 to 197 contribute to the ATP site; these read GED and KMSKS. Positions 193 to 197 match the 'KMSKS' region motif; it reads KMSKS.

It belongs to the class-I aminoacyl-tRNA synthetase family. Homodimer.

The protein resides in the cytoplasm. The enzyme catalyses tRNA(Trp) + L-tryptophan + ATP = L-tryptophyl-tRNA(Trp) + AMP + diphosphate + H(+). Catalyzes the attachment of tryptophan to tRNA(Trp). The sequence is that of Tryptophan--tRNA ligase from Bacillus subtilis (strain 168).